The chain runs to 194 residues: Protein A43 (194 aa).

The signal sequence occupies residues 1–22 (MMMMKWIISILTMSIMPVLAYS). At 23-165 (SSIFRFHSED…YKDINDKYND (143 aa)) the chain is on the extracellular side. 2 N-linked (GlcNAc...) asparagine; by host glycosylation sites follow: Asn65 and Asn114. The chain crosses the membrane as a helical span at residues 166–186 (IYDFTAICMLIASTLIVTIYV). Residues 187–194 (FKKIKMNS) are Cytoplasmic-facing.

Belongs to the orthopoxvirus OPG172 protein family.

The protein resides in the host membrane. It is found in the host cell surface. The chain is Protein A43 (OPG172) from Homo sapiens (Human).